A 76-amino-acid polypeptide reads, in one-letter code: MKAGIHPAYVDTTVVCGCGNTFQTRSTKESGHITVEVCSQCHPFYTGKQKILDTGGRVARFEARYGKRAGKKADAK.

4 residues coordinate Zn(2+): Cys16, Cys18, Cys38, and Cys41.

Belongs to the bacterial ribosomal protein bL31 family. Type A subfamily. In terms of assembly, part of the 50S ribosomal subunit. It depends on Zn(2+) as a cofactor.

Functionally, binds the 23S rRNA. The chain is Large ribosomal subunit protein bL31 from Nocardia farcinica (strain IFM 10152).